The chain runs to 97 residues: U-reduvitoxin-Pr11a (97 aa).

The N-terminal stretch at 1–20 is a signal peptide; the sequence is MKTALFLVFALAFIAVEGKM. 2 consecutive Pacifastin domains span residues 22 to 59 and 62 to 97; these read RACS…CPPR and EKSC…KLCL. 3 disulfide bridges follow: Cys24–Cys42, Cys37–Cys56, and Cys40–Cys51. Positions 57–59 are pro-Pro-Arg motif necessary for proteolytic processing; that stretch reads PPR. 3 disulfide bridges follow: Cys65-Cys82, Cys77-Cys96, and Cys80-Cys91.

The protein belongs to the protease inhibitor I19 family. As to expression, expressed by the venom gland.

The protein resides in the secreted. Functionally, inhibits trypsin activity and prophenoloxidase (PPO) activation, an enzyme essential for both clotting and insect innate immune responses. It does not inhibit activity of chymotrypsin and protease K, and has no effect on phenoloxidase (PO) activity. The chain is U-reduvitoxin-Pr11a from Platymeris rhadamanthus (Red spot assassin bug).